Reading from the N-terminus, the 348-residue chain is GDSL esterase/lipase At4g30140 (348 aa).

Positions 1–28 (MVEGESKALWIILATVFAVAAVAPAVHG) are cleaved as a signal peptide. The active-site Nucleophile is serine 40. Catalysis depends on residues aspartate 316 and histidine 319. Residue asparagine 342 is glycosylated (N-linked (GlcNAc...) asparagine).

This sequence belongs to the 'GDSL' lipolytic enzyme family.

The protein localises to the secreted. The protein is GDSL esterase/lipase At4g30140 of Arabidopsis thaliana (Mouse-ear cress).